The following is a 254-amino-acid chain: MLDNCKRLLFRKFPCFLSMAPSPLFLTQTPRLLDEFLKGGVVMFPLLLLSILALTTAFERGWFWSRLLIQEDQVVRDVLDAAVEDLVKAREIAEHARHLAIGRFLLAPLKLRHPSPETFRLAMEATADKEFARMRRGDKLLETIIALAPLLGLLGTVTGLIRTFNNLNIGGGGSSAEATQAASGIGEALITTAAGMMVAIFALLVFRVLVSLQSQQMDYFAAVGSELELIYREVWYEPHQPMPNLLMAARIAEP.

A run of 3 helical transmembrane segments spans residues 39–59, 141–161, and 185–205; these read GGVV…TAFE, LETI…TGLI, and IGEA…ALLV.

The protein belongs to the ExbB/TolQ family.

It localises to the cell inner membrane. Involved in the TonB-dependent energy-dependent transport of various receptor-bound substrates. Protects ExbD from proteolytic degradation and functionally stabilizes TonB. This is Putative biopolymer transport protein ExbB-like 1 from Synechocystis sp. (strain ATCC 27184 / PCC 6803 / Kazusa).